A 406-amino-acid polypeptide reads, in one-letter code: MNITDIREQFPILHQQVNGHDLVYLDSAATSQKPRAVIETLDKYYNQYNSNVHRGVHTLGTRATDGYEGAREKVRKFINAKSMAEIIFTKGTTTSLNMVALSYARANLKPGDEVVITYMEHHANIIPWQQAVKATGATLKYIPLQEDGTISLEDVRETVTSNTKIVAVSHVSNVLGTVNPIKEMAKIAHDNGAVIVVDGAQSTPHMKIDVQDLDCDFFALSSHKMCGPTGVGVLYGKKALLENMEPAEFGGEMIDFVGLYESTWKELPWKFEAGTPIIAGAIGLGAAIDFLEEIGLDEISRHEHKLAAYALERFRQLDGVTVYGPEERAGLVTFNLDDVHPHDVATVLDAEGIAVRAGHHCAQPLMKWLDVTATARASFYLYNTEEEIDKLVEALQKTKEYFTNVF.

Lys-224 is modified (N6-(pyridoxal phosphate)lysine). Cys-361 (cysteine persulfide intermediate) is an active-site residue.

Belongs to the class-V pyridoxal-phosphate-dependent aminotransferase family. Csd subfamily. In terms of assembly, homodimer. Interacts with SufU; this interaction induces an opening of the active site pocket of SufS. Interacts with frataxin/Fra. The cofactor is pyridoxal 5'-phosphate.

The catalysed reaction is (sulfur carrier)-H + L-cysteine = (sulfur carrier)-SH + L-alanine. Its activity is regulated as follows. A Cys to Ala mutation in SufU (Cys-41-Ala) has been described to be a competivie inhibitor of SufS activity and a non-competitive inhibitor. Its function is as follows. Type II cysteine desulfurase that acts as the initial step in the SUF-like Fe-S cluster assembly pathway. Catalyzes the removal of elemental sulfur atoms from L-cysteine by using the cofactor pyridoxal 5'-phosphate (PLP), resulting in the production of L-alanine and persulfide. Activity is stimulated by SufU, which acts as a sulfurtransferase that receives sulfur from SufS via a zinc-ligand swapping mechanism and transfers it to SufB. This chain is Cysteine desulfurase SufS (sufS), found in Bacillus subtilis (strain 168).